The following is a 404-amino-acid chain: Cysteine desulfurase IscS (404 aa).

Residues 75–76, N155, Q183, and 203–205 contribute to the pyridoxal 5'-phosphate site; these read AT and SGH. Residue K206 is modified to N6-(pyridoxal phosphate)lysine. A pyridoxal 5'-phosphate-binding site is contributed by T243. C328 functions as the Cysteine persulfide intermediate in the catalytic mechanism. C328 contributes to the [2Fe-2S] cluster binding site.

It belongs to the class-V pyridoxal-phosphate-dependent aminotransferase family. NifS/IscS subfamily. As to quaternary structure, homodimer. Forms a heterotetramer with IscU, interacts with other sulfur acceptors. Requires pyridoxal 5'-phosphate as cofactor.

It is found in the cytoplasm. It carries out the reaction (sulfur carrier)-H + L-cysteine = (sulfur carrier)-SH + L-alanine. It participates in cofactor biosynthesis; iron-sulfur cluster biosynthesis. Its function is as follows. Master enzyme that delivers sulfur to a number of partners involved in Fe-S cluster assembly, tRNA modification or cofactor biosynthesis. Catalyzes the removal of elemental sulfur atoms from cysteine to produce alanine. Functions as a sulfur delivery protein for Fe-S cluster synthesis onto IscU, an Fe-S scaffold assembly protein, as well as other S acceptor proteins. The chain is Cysteine desulfurase IscS from Shewanella amazonensis (strain ATCC BAA-1098 / SB2B).